A 160-amino-acid polypeptide reads, in one-letter code: SsrA-binding protein (160 aa).

This sequence belongs to the SmpB family.

The protein localises to the cytoplasm. In terms of biological role, required for rescue of stalled ribosomes mediated by trans-translation. Binds to transfer-messenger RNA (tmRNA), required for stable association of tmRNA with ribosomes. tmRNA and SmpB together mimic tRNA shape, replacing the anticodon stem-loop with SmpB. tmRNA is encoded by the ssrA gene; the 2 termini fold to resemble tRNA(Ala) and it encodes a 'tag peptide', a short internal open reading frame. During trans-translation Ala-aminoacylated tmRNA acts like a tRNA, entering the A-site of stalled ribosomes, displacing the stalled mRNA. The ribosome then switches to translate the ORF on the tmRNA; the nascent peptide is terminated with the 'tag peptide' encoded by the tmRNA and targeted for degradation. The ribosome is freed to recommence translation, which seems to be the essential function of trans-translation. The protein is SsrA-binding protein of Histophilus somni (strain 129Pt) (Haemophilus somnus).